We begin with the raw amino-acid sequence, 123 residues long: Large ribosomal subunit protein bL19 (123 aa).

Belongs to the bacterial ribosomal protein bL19 family.

Functionally, this protein is located at the 30S-50S ribosomal subunit interface and may play a role in the structure and function of the aminoacyl-tRNA binding site. This chain is Large ribosomal subunit protein bL19, found in Acinetobacter baylyi (strain ATCC 33305 / BD413 / ADP1).